A 334-amino-acid chain; its full sequence is Ficolin-1 (334 aa).

Residues 1-17 (MQWPTLWAFSGLLCLCP) form the signal peptide. Residues 47–117 (SCPGFPGPPG…SLGEKELGDT (71 aa)) are disordered. The Collagen-like domain maps to 50 to 88 (GFPGPPGPKGEPGSPAGRGERGFQGSPGKMGPAGSKGEP). The region spanning 117–334 (TLCQRGPRSC…KVAEMKIRAS (218 aa)) is the Fibrinogen C-terminal domain. Cystine bridges form between Cys119-Cys147 and Cys126-Cys154. The interval 123–162 (PRSCKDLLTRGIFLTGWYTIHLPDCRPLTVLCDMDVDGGG) is a domain; contributes to trimerization. The segment at 163–251 (WTVFQRRVDG…LTLGQFLEGT (89 aa)) is b domain; contributes to trimerization. N-linked (GlcNAc...) asparagine glycosylation occurs at Asn261. Ca(2+) contacts are provided by Asp270 and Asp272. A disulfide bridge links Cys278 with Cys291. 290-292 (NCH) serves as a coordination point for a carbohydrate. The tract at residues 325-334 (KVAEMKIRAS) is p domain.

This sequence belongs to the ficolin lectin family. Homotrimer. Interacts with elastin/ELN. Interacts (via Fibrinogen C-terminal domain) with FFAR2. Interacts with CRP; may regulate monocyte activation by FCN1. As to expression, highly expressed in liver and spleen.

The protein resides in the secreted. Its subcellular location is the cell membrane. In terms of biological role, extracellular lectin functioning as a pattern-recognition receptor in innate immunity. Binds the sugar moieties of pathogen-associated molecular patterns (PAMPs) displayed on microbes and activates the lectin pathway of the complement system. May also activate monocytes through a G protein-coupled receptor, FFAR2, inducing the secretion of interleukin-8/IL-8. Binds preferentially to 9-O-acetylated 2-6-linked sialic acid derivatives and to various glycans containing sialic acid engaged in a 2-3 linkage. The chain is Ficolin-1 (Fcn1) from Mus musculus (Mouse).